Consider the following 615-residue polypeptide: Chaperone protein HtpG (615 aa).

The tract at residues 1–335 (MSAEKQTHGF…APDLPLNVSR (335 aa)) is a; substrate-binding. The b stretch occupies residues 336–541 (ELLQDYGPVQ…EDQLGPQMRR (206 aa)). Positions 542 to 615 (MLEAAGQPVP…RMQALLSQSV (74 aa)) are c.

It belongs to the heat shock protein 90 family. In terms of assembly, homodimer.

The protein localises to the cytoplasm. In terms of biological role, molecular chaperone. Has ATPase activity. This is Chaperone protein HtpG from Alcanivorax borkumensis (strain ATCC 700651 / DSM 11573 / NCIMB 13689 / SK2).